Consider the following 173-residue polypeptide: uncharacterized protein (173 aa).

Residues 1–15 constitute a propeptide, leader sequence; the sequence is MERKLSQRAGNTFKG. At phenylalanine 16 the chain carries N-methylphenylalanine. The chain crosses the membrane as a helical span at residues 16–37; that stretch reads FTLVEVLITLAIISLVFSLILI.

The protein localises to the membrane. This is an uncharacterized protein from Aquifex aeolicus (strain VF5).